Consider the following 304-residue polypeptide: Protoheme IX farnesyltransferase (304 aa).

A run of 9 helical transmembrane segments spans residues Val-32–Val-52, Leu-54–Phe-74, Ala-104–Asn-124, Leu-126–Leu-146, Ile-154–Gly-174, Ala-180–Ile-200, Cys-226–Met-246, Cys-247–Trp-267, and Phe-284–Val-304.

Belongs to the UbiA prenyltransferase family. Protoheme IX farnesyltransferase subfamily.

The protein localises to the cell inner membrane. It catalyses the reaction heme b + (2E,6E)-farnesyl diphosphate + H2O = Fe(II)-heme o + diphosphate. The protein operates within porphyrin-containing compound metabolism; heme O biosynthesis; heme O from protoheme: step 1/1. Functionally, converts heme B (protoheme IX) to heme O by substitution of the vinyl group on carbon 2 of heme B porphyrin ring with a hydroxyethyl farnesyl side group. The sequence is that of Protoheme IX farnesyltransferase from Shewanella sediminis (strain HAW-EB3).